A 712-amino-acid polypeptide reads, in one-letter code: MRVLLHLPALLASLILLQAAASTTRAQTTRTSAISDTVSQAKVQVNKAFLDSRTRLKTAMSSETPTSRQLSEYLKHAKGRTRTAIRNGQVWEESLKRLRQKASLTNVTDPSLDLTSLSLEVGCGAPAPVVRCDPCSPYRTITGDCNNRRKPALGAANRALARWLPAEYEDGLSLPFGWTPGKTRNGFPLPLAREVSNKIVGYLNEEGVLDQNRSLLFMQWGQIVDHDLDFAPDTELGSSEYSKAQCDEYCIQGDNCFPIMFPPNDPKAGTQGKCMPFFRAGFVCPTPPYKSLAREQINALTSFLDASFVYSSEPSLASRLRNLSSPLGLMAVNQEVSDHGLPYLPYDSKKPSPCEFINTTARVPCFLAGDSRASEHILLATSHTLFLREHNRLARELKRLNPQWDGEKLYQEARKILGAFVQIITFRDYLPILLGDHMQKWIPPYQGYSESVDPRISNVFTFAFRFGHLEVPSSMFRLDENYQPWGPEPELPLHTLFFNTWRMVKDGGIDPLVRGLLAKKSKLMKQNKMMTGELRNKLFQPTHRIHGFDLAAINTQRCRDHGQPGYNSWRAFCDLSQPQTLEELNTVLKSKMLAKKLLGLYGTPDNIDIWIGAIAEPLVERGRVGPLLACLLGKQFQQIRDGDRFWWENPGVFTNEQKDSLQKMSFSRLVCDNTRITKVPRDPFWANSYPYDFVDCSAIDKLDLSPWASVKN.

Residues 1-26 (MRVLLHLPALLASLILLQAAASTTRA) form the signal peptide. Residues 27–80 (QTTRTSAISDTVSQAKVQVNKAFLDSRTRLKTAMSSETPTSRQLSEYLKHAKGR) constitute a propeptide that is removed on maturation. N106 carries an N-linked (GlcNAc...) asparagine glycan. C132 and C145 form a disulfide bridge. Residue N212 is glycosylated (N-linked (GlcNAc...) asparagine). D225 lines the heme b pocket. The Proton acceptor role is filled by H226. D227 provides a ligand contact to Ca(2+). Disulfide bonds link C246–C256 and C250–C274. The Ca(2+) site is built by T301, F303, D305, and S307. Phosphoserine is present on S315. N-linked (GlcNAc...) asparagine glycans are attached at residues N322 and N358. C354 and C365 form a disulfide bridge. Positions 375 and 468 each coordinate heme b. A 3'-nitrotyrosine modification is found at Y482. 2 cysteine pairs are disulfide-bonded: C573–C630 and C671–C696.

The protein belongs to the peroxidase family. XPO subfamily. Ca(2+) serves as cofactor. Requires heme b as cofactor. As to expression, mammary gland, milk and salivary gland. Found in bronchial submucosal glands.

It is found in the secreted. The protein resides in the cytoplasm. The enzyme catalyses 2 a phenolic donor + H2O2 = 2 a phenolic radical donor + 2 H2O. It catalyses the reaction thiocyanate + H2O2 + H(+) = hypothiocyanous acid + H2O. The catalysed reaction is iodide + H2O2 = hypoiodite + H2O. Heme-containing oxidoreductase which catalyzes the conversion of thiocyanate (SCN(-)) into antimicrobial agent hypothiocyanous acid (OSCN(-)) in the presence of hydrogen peroxide (H2O2). Also involved in the conversion of iodide (I(-)) into hypoiodite (IO(-)) in the presence of H2O2. Responsible for the inactivation of a wide range of micro-organisms and hence, important component of defense mechanism. Shows antibacterial properties against Pseudomonas aeruginosa. The lactoperoxidase-SCN(-)-H2O2 system shows antibacterial properties against Burkholderia cepacia and Haemophilus influenzae in vitro. Present in mammary and salivary gland secretions and may contribute to airway host defense against infection. May contribute to maintaining an appropriate H2O2 cellular level, therefore protecting cells from H2O2-caused injuries and inflammation. The protein is Lactoperoxidase of Homo sapiens (Human).